Here is a 249-residue protein sequence, read N- to C-terminus: MSVKKQLERLSELGAYYHKNGWMPGTAGNLSIRIPEESGFWVSGSGLDKDLLNKRNFLYVDLESGKPVDSKNVKATKGLKPSAETSIHRAVYRALDEVGCGLHVHTLESNLICANTSKNEPIALFELPAIEILKAYGIWEENPKVYVPIIYNFPNVQDISDCLEKYLKEYRPHVPFCIIEKHGITVWGKDAVQANRNLEATDFILKYMTSWKSFSYSGEPRKLSVSDVLEQDRREIFSVEFPVYPATFY.

Zn(2+) is bound by residues His-103 and His-105.

This sequence belongs to the aldolase class II family. MtnB subfamily. The cofactor is Zn(2+).

The enzyme catalyses 5-(methylsulfanyl)-D-ribulose 1-phosphate = 5-methylsulfanyl-2,3-dioxopentyl phosphate + H2O. Its pathway is amino-acid biosynthesis; L-methionine biosynthesis via salvage pathway; L-methionine from S-methyl-5-thio-alpha-D-ribose 1-phosphate: step 2/6. Catalyzes the dehydration of methylthioribulose-1-phosphate (MTRu-1-P) into 2,3-diketo-5-methylthiopentyl-1-phosphate (DK-MTP-1-P). This Leptospira interrogans serogroup Icterohaemorrhagiae serovar copenhageni (strain Fiocruz L1-130) protein is Methylthioribulose-1-phosphate dehydratase.